The chain runs to 66 residues: Large ribosomal subunit protein bL33c (66 aa).

The protein belongs to the bacterial ribosomal protein bL33 family.

Its subcellular location is the plastid. The protein localises to the chloroplast. This Ceratophyllum demersum (Rigid hornwort) protein is Large ribosomal subunit protein bL33c.